A 140-amino-acid chain; its full sequence is Nucleoside diphosphate kinase (140 aa).

ATP contacts are provided by Lys-11, Phe-59, Arg-87, Thr-93, Arg-104, and Asn-114. Catalysis depends on His-117, which acts as the Pros-phosphohistidine intermediate.

Belongs to the NDK family. As to quaternary structure, homotetramer. Mg(2+) serves as cofactor.

It localises to the cytoplasm. The enzyme catalyses a 2'-deoxyribonucleoside 5'-diphosphate + ATP = a 2'-deoxyribonucleoside 5'-triphosphate + ADP. It carries out the reaction a ribonucleoside 5'-diphosphate + ATP = a ribonucleoside 5'-triphosphate + ADP. Functionally, major role in the synthesis of nucleoside triphosphates other than ATP. The ATP gamma phosphate is transferred to the NDP beta phosphate via a ping-pong mechanism, using a phosphorylated active-site intermediate. The protein is Nucleoside diphosphate kinase of Persephonella marina (strain DSM 14350 / EX-H1).